The chain runs to 621 residues: SH2B adapter protein 2 (621 aa).

Y47 is modified (phosphotyrosine). S130 bears the Phosphoserine mark. Positions 143-166 (RRSSPEPDGGATPKAAEPASEPRD) are disordered. The PH domain occupies 186–299 (DIQREGALRF…WVADIQGCVD (114 aa)). S303 is modified (phosphoserine). Residues 409 to 507 (WFHGTLSRVK…SADITLRSYV (99 aa)) form the SH2 domain. Disordered regions lie at residues 507–528 (VRAQ…PVPA) and 549–611 (PASP…LGRA). A compositionally biased stretch (low complexity) spans 552–571 (PSNGAGASSSSGSSSSATSL). Phosphoserine is present on S597. Y618 is subject to Phosphotyrosine.

The protein belongs to the SH2B adapter family. In terms of assembly, homodimer. Interacts with KIT/c-KIT, SHC1, EPOR, PDGFR, VAV1 and VAV3. Interacts (via N-terminal region) with SHC1. Interacts (via the phosphorylated C-terminus) with GRB2. Interacts (via its SH2 domain) with EPOR, INSR and KIT. Interacts with GRB2 after B-cell antigen receptor stimulation. Interacts (via PH domain) with VAV3. Interacts with NTRK1, NTRK2 and NTRK3 (phosphorylated); after stimulation of the receptor by its extracellular ligand and subsequent autophosphorylation of the receptor. Binds INSR, GRB2, ASB6 and CAP. Insulin stimulation leads to dissociation of CAP. Binds CBS only when SH2B2/APS has become phosphorylated. INSR binding does not depend on the phosphorylation of SH2B2/APS. In terms of processing, tyrosine phosphorylated by JAK2, KIT and other kinases activated by B-cell receptor in response to stimulation with cytokines, IL3, IL5, PDGF, IGF1, IGF2, CSF2/GM-CSF and cross-linking of the B-cell receptor complex. In terms of tissue distribution, strongly expressed in brain; also expressed in spleen, kidney and skeletal muscle, and at low levels in small intestine and bone marrow. Strongly expressed in B-cell lines, but not T-cell lines. Also expressed in myeloid and fibroblast cell lines.

The protein resides in the cytoplasm. It localises to the cell membrane. Adapter protein for several members of the tyrosine kinase receptor family. Involved in multiple signaling pathways. May be involved in coupling from immunoreceptor to Ras signaling. Acts as a negative regulator of cytokine signaling in collaboration with CBL. Binds to EPOR and suppresses EPO-induced STAT5 activation, possibly through a masking effect on STAT5 docking sites in EPOR. Suppresses PDGF-induced mitogenesis. May induce cytoskeletal reorganization via interaction with VAV3. The chain is SH2B adapter protein 2 (Sh2b2) from Mus musculus (Mouse).